A 99-amino-acid chain; its full sequence is Acylphosphatase (99 aa).

An Acylphosphatase-like domain is found at Arg-10–Arg-99. Residues Arg-25 and Asn-43 contribute to the active site.

The protein belongs to the acylphosphatase family.

The enzyme catalyses an acyl phosphate + H2O = a carboxylate + phosphate + H(+). The chain is Acylphosphatase (acyP) from Corynebacterium efficiens (strain DSM 44549 / YS-314 / AJ 12310 / JCM 11189 / NBRC 100395).